The chain runs to 466 residues: Asparagine--tRNA ligase (466 aa).

Belongs to the class-II aminoacyl-tRNA synthetase family. Homodimer.

The protein resides in the cytoplasm. The enzyme catalyses tRNA(Asn) + L-asparagine + ATP = L-asparaginyl-tRNA(Asn) + AMP + diphosphate + H(+). The polypeptide is Asparagine--tRNA ligase (Xylella fastidiosa (strain Temecula1 / ATCC 700964)).